The chain runs to 362 residues: Alternative oxidase, mitochondrial (362 aa).

Residues 1 to 64 (MNTPKVNILH…RNFSTTSVTR (64 aa)) constitute a mitochondrion transit peptide. Residues 156–176 (LVRFIFLESIAGVPGMVAGML) form a helical membrane-spanning segment. Fe cation is bound by residues Glu163, Glu202, and His205. The helical transmembrane segment at 222–242 (LILGAQGVFFNAMFLSYLISP) threads the bilayer. Positions 253, 310, and 313 each coordinate Fe cation.

The protein belongs to the alternative oxidase family. In terms of assembly, homodimer; disulfide-linked. Fe cation is required as a cofactor.

Its subcellular location is the mitochondrion inner membrane. In terms of biological role, catalyzes cyanide-resistant oxygen consumption. May increase respiration when the cytochrome respiratory pathway is restricted, or in response to low temperatures. The sequence is that of Alternative oxidase, mitochondrial (aod-1) from Neurospora crassa (strain ATCC 24698 / 74-OR23-1A / CBS 708.71 / DSM 1257 / FGSC 987).